The primary structure comprises 225 residues: Membrane protein (225 aa).

Over 1-20 the chain is Virion surface; that stretch reads MPNETNCTLDFEQSVQLFKE. A helical membrane pass occupies residues 21–41; that stretch reads YNLFITAFLLFLTIILQYGYA. Residues 42-51 are Intravirion-facing; that stretch reads TRSKVIYTLK. A helical membrane pass occupies residues 52 to 72; sequence MIVLWCFWPLNIAVGVISCTY. The Virion surface portion of the chain corresponds to 73 to 77; sequence PPNTG. Residues 78–98 form a helical membrane-spanning segment; it reads GLVAAIILTVFACLSFVGYWI. The Intravirion segment spans residues 99 to 225; sequence QSIRLFKRCR…VATGGSSLYT (127 aa).

The protein belongs to the gammacoronaviruses M protein family. As to quaternary structure, homomultimer. Interacts with envelope E protein in the budding compartment of the host cell, which is located between endoplasmic reticulum and the Golgi complex. Forms a complex with HE and S proteins. Interacts with nucleocapsid N protein. This interaction probably participates in RNA packaging into the virus.

Its subcellular location is the virion membrane. The protein resides in the host Golgi apparatus membrane. Its function is as follows. Component of the viral envelope that plays a central role in virus morphogenesis and assembly via its interactions with other viral proteins. The sequence is that of Membrane protein from Avian infectious bronchitis virus (strain Beaudette) (IBV).